A 210-amino-acid polypeptide reads, in one-letter code: Protein-L-isoaspartate O-methyltransferase (210 aa).

The active site involves Ser-59.

Belongs to the methyltransferase superfamily. L-isoaspartyl/D-aspartyl protein methyltransferase family.

The protein localises to the cytoplasm. It carries out the reaction [protein]-L-isoaspartate + S-adenosyl-L-methionine = [protein]-L-isoaspartate alpha-methyl ester + S-adenosyl-L-homocysteine. Functionally, catalyzes the methyl esterification of L-isoaspartyl residues in peptides and proteins that result from spontaneous decomposition of normal L-aspartyl and L-asparaginyl residues. It plays a role in the repair and/or degradation of damaged proteins. This Nitratidesulfovibrio vulgaris (strain ATCC 29579 / DSM 644 / CCUG 34227 / NCIMB 8303 / VKM B-1760 / Hildenborough) (Desulfovibrio vulgaris) protein is Protein-L-isoaspartate O-methyltransferase.